The following is a 396-amino-acid chain: Lipid-A-disaccharide synthase (396 aa).

The protein belongs to the LpxB family.

The catalysed reaction is a lipid X + a UDP-2-N,3-O-bis[(3R)-3-hydroxyacyl]-alpha-D-glucosamine = a lipid A disaccharide + UDP + H(+). It participates in bacterial outer membrane biogenesis; LPS lipid A biosynthesis. Functionally, condensation of UDP-2,3-diacylglucosamine and 2,3-diacylglucosamine-1-phosphate to form lipid A disaccharide, a precursor of lipid A, a phosphorylated glycolipid that anchors the lipopolysaccharide to the outer membrane of the cell. The polypeptide is Lipid-A-disaccharide synthase (Rhodopseudomonas palustris (strain BisB18)).